Consider the following 943-residue polypeptide: Isoleucine--tRNA ligase 1 (943 aa).

The 'HIGH' region motif lies at 58-68 (PYANGTIHIGH). Glu-567 contacts L-isoleucyl-5'-AMP. The 'KMSKS' region motif lies at 608-612 (KMSKS). Lys-611 is a binding site for ATP. Residues Cys-906, Cys-909, Cys-926, and Cys-929 each contribute to the Zn(2+) site.

This sequence belongs to the class-I aminoacyl-tRNA synthetase family. IleS type 1 subfamily. As to quaternary structure, monomer. It depends on Zn(2+) as a cofactor.

The protein localises to the cytoplasm. The enzyme catalyses tRNA(Ile) + L-isoleucine + ATP = L-isoleucyl-tRNA(Ile) + AMP + diphosphate. Its function is as follows. Catalyzes the attachment of isoleucine to tRNA(Ile). As IleRS can inadvertently accommodate and process structurally similar amino acids such as valine, to avoid such errors it has two additional distinct tRNA(Ile)-dependent editing activities. One activity is designated as 'pretransfer' editing and involves the hydrolysis of activated Val-AMP. The other activity is designated 'posttransfer' editing and involves deacylation of mischarged Val-tRNA(Ile). Confers resistance to the antibiotic mupirocin (pseudomonic acid A), an Ile-analog produced by P.fluorescens NCIMB 10586 itself that competitively inhibits activation by Ile-tRNA synthetase, thus inhibiting protein biosynthesis. This Pseudomonas fluorescens protein is Isoleucine--tRNA ligase 1 (ileS1).